The primary structure comprises 1124 residues: Regulator of nonsense transcripts 1 (1124 aa).

Positions 1–410 are sufficient for interaction with RENT2; sequence MSVEAYGPSS…LRSSVGAPVE (410 aa). Phosphoserine is present on residues Ser-10 and Ser-31. The segment at 39-69 is disordered; it reads TLPSQTQTPPGGPGGAGGPGGAGAGGAAGQL. Residues 51 to 66 show a composition bias toward gly residues; the sequence is PGGAGGPGGAGAGGAA. Positions 110-267 constitute a Upf1 CH-rich domain; the sequence is TKDLPVHACS…NKLEELWKEN (158 aa). Zn(2+)-binding residues include Cys-118, Cys-121, Cys-132, Ser-135, Cys-140, His-150, His-154, Cys-160, Cys-178, Cys-181, Cys-204, and Cys-208. Residues 118 to 150 form a C3H region; it reads CSYCGIHDPACVVYCNTSKKWFCNGRGNTSGSH. Residues 132–160 are CC/SHH/C; that stretch reads CNTSKKWFCNGRGNTSGSHIVNHLVRAKC. Residues 178–208 are C4; sequence CYNCGCRNVFLLGFIPAKADSVVVLLCRQPC. Residues Gln-481 and 501-505 each bind ATP; that span reads GTGKT. Phosphoserine is present on Ser-560. Gln-671, Tyr-708, and Glu-839 together coordinate ATP. The residue at position 951 (Ser-951) is a Phosphoserine. Disordered stretches follow at residues 1004-1053 and 1066-1091; these read FGQA…VASQ and SMSQ…YLGD. Arg-1014 is subject to Omega-N-methylarginine. Residues 1020 to 1029 show a composition bias toward basic residues; it reads KTGRGGRQKN. Residues 1036 to 1053 show a composition bias toward polar residues; that stretch reads PSQTTLPNSQASQDVASQ. Positions 1066–1081 are enriched in low complexity; sequence SMSQPSQMSQPGLSQP. A phosphoserine mark is found at Ser-1084, Ser-1102, Ser-1105, and Ser-1122. 2 consecutive short sequence motifs ([ST]-Q motif) follow at residues 1084 to 1085 and 1102 to 1103; these read SQ. The tract at residues 1105–1124 is disordered; the sequence is STYQGERAYQHGGVTGLSQY.

This sequence belongs to the DNA2/NAM7 helicase family. Found in a post-splicing messenger ribonucleoprotein (mRNP) complex. Associates with the exon junction complex (EJC). Associates with the SGM1C complex; is phosphorylated by the complex kinase component SGM1. Part of a complex composed of SMG1, DHX34 and UPF1; within the complex DHX34 acts as a scaffolding protein to facilitate SMG1 phosphorylation of UPF1. Interacts with UPF2. Interacts with UPF3A and UPF3B. Interacts with EST1A. Interacts with SLBP. Interacts (when hyperphosphorylated) with PNRC2. Interacts with AGO1 and AGO2. Interacts with GSPT2. Interacts with isoform 1 and isoform 5 of ADAR/ADAR1. Interacts with SMG7. Interacts with ZC3H12A; this interaction occurs in a mRNA translationally active- and termination-dependent manner and is essential for ZC3H12A-mediated degradation of target mRNAs. Interacts with CPSF6. Interacts with MOV10; the interaction is direct and RNA-dependent. Interacts with SHFL; the interaction increases in the presence of RNA. Interacts with UPF2 and DDX4; interactions are mediated by TDRD6. Interacts with DHX34 and PABPC1/PABP1; the interactions are RNA-independent. Interacts with RBM46. Post-translationally, phosphorylated by SMG1; required for formation of mRNA surveillance complexes. Localizes in male germ cells.

The protein resides in the cytoplasm. Its subcellular location is the P-body. It is found in the nucleus. The protein localises to the perinuclear region. It carries out the reaction ATP + H2O = ADP + phosphate + H(+). Its function is as follows. RNA-dependent helicase required for nonsense-mediated decay (NMD) of aberrant mRNAs containing premature stop codons and modulates the expression level of normal mRNAs. Is recruited to mRNAs upon translation termination and undergoes a cycle of phosphorylation and dephosphorylation; its phosphorylation appears to be a key step in NMD. Recruited by release factors to stalled ribosomes together with the SMG1C protein kinase complex to form the transient SURF (SMG1-UPF1-eRF1-eRF3) complex. In EJC-dependent NMD, the SURF complex associates with the exon junction complex (EJC) (located 50-55 or more nucleotides downstream from the termination codon) through UPF2 and allows the formation of an UPF1-UPF2-UPF3 surveillance complex which is believed to activate NMD. Phosphorylated UPF1 is recognized by EST1B/SMG5, SMG6 and SMG7 which are thought to provide a link to the mRNA degradation machinery involving exonucleolytic and endonucleolytic pathways, and to serve as adapters to protein phosphatase 2A (PP2A), thereby triggering UPF1 dephosphorylation and allowing the recycling of NMD factors. UPF1 can also activate NMD without UPF2 or UPF3, and in the absence of the NMD-enhancing downstream EJC indicative for alternative NMD pathways. Plays a role in replication-dependent histone mRNA degradation at the end of phase S; the function is independent of UPF2. For the recognition of premature termination codons (PTC) and initiation of NMD a competitive interaction between UPF1 and PABPC1 with the ribosome-bound release factors is proposed. The ATPase activity of UPF1 is required for disassembly of mRNPs undergoing NMD. Together with UPF2 and dependent on TDRD6, mediates the degradation of mRNA harboring long 3'UTR by inducing the NMD machinery. Also capable of unwinding double-stranded DNA and translocating on single-stranded DNA. This Mus musculus (Mouse) protein is Regulator of nonsense transcripts 1.